The following is a 998-amino-acid chain: tRNA (34-2'-O)-methyltransferase regulator WDR6 (998 aa).

WD repeat units follow at residues 148 to 185 (LYYT…ESDP), 200 to 239 (AHNG…DWTT), 250 to 291 (GHSS…ILKR), 294 to 333 (QFGA…NRPK), 476 to 515 (NNRE…DDFQ), 527 to 566 (MGSN…STLR), 567 to 608 (VSQR…LLQL), 664 to 704 (RNCN…LSQR), 779 to 821 (ARLM…QLDL), 826 to 865 (DIQR…TYFQ), and 868 to 911 (LHVT…VEQK).

This sequence belongs to the WD repeat WDR6 family. Interacts with Trm7-34.

Its subcellular location is the cytoplasm. In terms of biological role, together with methyltransferase Trm7-34, methylates the 2'-O-ribose of nucleotides at position 34 of the anticodon loop of substrate tRNAs. The sequence is that of tRNA (34-2'-O)-methyltransferase regulator WDR6 from Drosophila melanogaster (Fruit fly).